The sequence spans 103 residues: Urease subunit beta (103 aa).

Belongs to the urease beta subunit family. As to quaternary structure, heterotrimer of UreA (gamma), UreB (beta) and UreC (alpha) subunits. Three heterotrimers associate to form the active enzyme.

It is found in the cytoplasm. The enzyme catalyses urea + 2 H2O + H(+) = hydrogencarbonate + 2 NH4(+). Its pathway is nitrogen metabolism; urea degradation; CO(2) and NH(3) from urea (urease route): step 1/1. Functionally, ureolysis may allow urea to be employed as a nitrogen source for growth and produces ammonia which may protect from killing at low pH. In Streptococcus salivarius (strain 57.I), this protein is Urease subunit beta.